Here is a 47-residue protein sequence, read N- to C-terminus: Large ribosomal subunit protein bL27c (47 aa).

The segment at 1–21 is disordered; that stretch reads STKNGRDSNAQRLGVKKYGGE.

The protein belongs to the bacterial ribosomal protein bL27 family.

Its subcellular location is the plastid. The protein resides in the chloroplast. In Porphyridium purpureum (Red alga), this protein is Large ribosomal subunit protein bL27c (rpl27).